The primary structure comprises 128 residues: MPFLKPSKVSLKRILQGNPPKPIGLTEYGHLLRLVGLREADSKEENERTILKLNEGIIQMHAIERLDTSFIKEPFRTLNHAINAESLPSLPDQEPWNVFQNAKKRDGQYFAVYSKLKDDSSNESPNKQ.

The protein localises to the mitochondrion. This is an uncharacterized protein from Schizosaccharomyces pombe (strain 972 / ATCC 24843) (Fission yeast).